The sequence spans 411 residues: Tyrosine--tRNA ligase (411 aa).

Positions 48 to 57 match the 'HIGH' region motif; the sequence is PTAPDIHLGH. Positions 232-236 match the 'KMSKS' region motif; sequence KMSKS. Lysine 235 is an ATP binding site. The S4 RNA-binding domain occupies 347 to 409; it reads VLLPKVLFSA…GKRRFLKIIF (63 aa).

This sequence belongs to the class-I aminoacyl-tRNA synthetase family. TyrS type 2 subfamily. As to quaternary structure, homodimer.

Its subcellular location is the cytoplasm. The enzyme catalyses tRNA(Tyr) + L-tyrosine + ATP = L-tyrosyl-tRNA(Tyr) + AMP + diphosphate + H(+). Functionally, catalyzes the attachment of tyrosine to tRNA(Tyr) in a two-step reaction: tyrosine is first activated by ATP to form Tyr-AMP and then transferred to the acceptor end of tRNA(Tyr). The sequence is that of Tyrosine--tRNA ligase from Carboxydothermus hydrogenoformans (strain ATCC BAA-161 / DSM 6008 / Z-2901).